A 492-amino-acid polypeptide reads, in one-letter code: Putative heme-binding protein VNG_2021C (492 aa).

H177 lines the heme pocket. The tract at residues A253–G301 is disordered. The segment covering A264–G301 has biased composition (basic and acidic residues). The ABM domain occupies G402–F490.

The protein in the N-terminal section; belongs to the ChdC family.

The sequence is that of Putative heme-binding protein VNG_2021C from Halobacterium salinarum (strain ATCC 700922 / JCM 11081 / NRC-1) (Halobacterium halobium).